The chain runs to 26 residues: Turripeptide OL49 (26 aa).

In terms of processing, contains 3 disulfide bonds. Expressed by the venom duct.

It is found in the secreted. Functionally, acts as a neurotoxin by inhibiting an ion channel. The chain is Turripeptide OL49 from Iotyrris olangoensis (Sea snail).